Here is a 361-residue protein sequence, read N- to C-terminus: Serine/threonine-protein kinase SRK2I (361 aa).

A Protein kinase domain is found at 22-278; sequence YDFVKDIGSG…IPEIKTHSWF (257 aa). ATP contacts are provided by residues 28–36 and Lys-51; that span reads IGSGNFGVA. The active-site Proton acceptor is Asp-141.

This sequence belongs to the protein kinase superfamily. Ser/Thr protein kinase family. In terms of assembly, interacts with ABI1. Interacts with I-2 and TOPP1. Interacts with FREE1 (via C-terminus). Post-translationally, autophosphorylated in vitro. Expressed at low levels in seeds, seedlings, roots (especially in tips), stems, leaves, shoots, flowers and siliques.

The enzyme catalyses L-seryl-[protein] + ATP = O-phospho-L-seryl-[protein] + ADP + H(+). It catalyses the reaction L-threonyl-[protein] + ATP = O-phospho-L-threonyl-[protein] + ADP + H(+). Its activity is regulated as follows. Activated by autophosphorylation of its activation loop. In terms of biological role, together with SRK2D, key component and activator of the abscisic acid (ABA) signaling pathway that regulates numerous ABA responses, such as seed germination, Pro accumulation, root growth inhibition, dormancy and seedling growth, and, to a lesser extent, stomatal closure. In response to ABA, phosphorylates the ESCRT-I complex component FREE1, which is required for ABA-induced FREE1 nuclear import. This is Serine/threonine-protein kinase SRK2I (SRK2I) from Arabidopsis thaliana (Mouse-ear cress).